Reading from the N-terminus, the 453-residue chain is Glutamyl-tRNA(Gln) amidotransferase subunit A (453 aa).

Catalysis depends on charge relay system residues K56 and S131. Catalysis depends on S155, which acts as the Acyl-ester intermediate.

This sequence belongs to the amidase family. GatA subfamily. Heterotrimer of A, B and C subunits.

It carries out the reaction L-glutamyl-tRNA(Gln) + L-glutamine + ATP + H2O = L-glutaminyl-tRNA(Gln) + L-glutamate + ADP + phosphate + H(+). In terms of biological role, allows the formation of correctly charged Gln-tRNA(Gln) through the transamidation of misacylated Glu-tRNA(Gln) in organisms which lack glutaminyl-tRNA synthetase. The reaction takes place in the presence of glutamine and ATP through an activated gamma-phospho-Glu-tRNA(Gln). This is Glutamyl-tRNA(Gln) amidotransferase subunit A from Campylobacter fetus subsp. fetus (strain 82-40).